Consider the following 332-residue polypeptide: Biotin synthase (332 aa).

Residues 53–282 (YFGKKVKLNM…TKEIRISGGR (230 aa)) form the Radical SAM core domain. Residues cysteine 71, cysteine 75, and cysteine 78 each contribute to the [4Fe-4S] cluster site. [2Fe-2S] cluster is bound by residues cysteine 115, cysteine 147, cysteine 207, and arginine 277.

It belongs to the radical SAM superfamily. Biotin synthase family. Homodimer. [4Fe-4S] cluster is required as a cofactor. [2Fe-2S] cluster serves as cofactor.

The catalysed reaction is (4R,5S)-dethiobiotin + (sulfur carrier)-SH + 2 reduced [2Fe-2S]-[ferredoxin] + 2 S-adenosyl-L-methionine = (sulfur carrier)-H + biotin + 2 5'-deoxyadenosine + 2 L-methionine + 2 oxidized [2Fe-2S]-[ferredoxin]. Its pathway is cofactor biosynthesis; biotin biosynthesis; biotin from 7,8-diaminononanoate: step 2/2. Its function is as follows. Catalyzes the conversion of dethiobiotin (DTB) to biotin by the insertion of a sulfur atom into dethiobiotin via a radical-based mechanism. The chain is Biotin synthase from Bacillus thuringiensis (strain Al Hakam).